We begin with the raw amino-acid sequence, 92 residues long: MPNIKSAKKRVKVSERNRLINKAYKTRMKNSIKKVLLALQEGKSREEVEQLYKVAQSAIDKAAKIGAIHKNQASRRKSRLIAKINKHFASKE.

This sequence belongs to the bacterial ribosomal protein bS20 family.

Its function is as follows. Binds directly to 16S ribosomal RNA. The sequence is that of Small ribosomal subunit protein bS20 from Thermosipho africanus (strain TCF52B).